The primary structure comprises 610 residues: Zinc metalloproteinase-disintegrin-like VAP1 (610 aa).

Residues 1–20 form the signal peptide; that stretch reads MIQVLLVTISLAVFPYQGSS. Positions 21 to 189 are excised as a propeptide; that stretch reads VILESGNVND…KKASQSNLTP (169 aa). Residue Glu190 is modified to Pyrrolidone carboxylic acid (Glu). One can recognise a Peptidase M12B domain in the interval 199–395; that stretch reads KYVKLFLVAD…NMPQCILKKP (197 aa). Asn218 carries an N-linked (GlcNAc...) asparagine glycan. Intrachain disulfides connect Cys310–Cys390, Cys350–Cys374, and Cys352–Cys357. His335 contributes to the Zn(2+) binding site. A Metal-binding motif is present at residues 335–346; that stretch reads HEMGHNLGMDHD. Residue Glu336 is the Proton acceptor of the active site. Zn(2+) is bound by residues His339 and His345. The Disintegrin domain maps to 403 to 488; that stretch reads PAVCGNYFVE…AECTDRFQRN (86 aa). Residues Val405, Asn408, Phe410, Glu412, Glu415, and Asp418 each coordinate Ca(2+). Cystine bridges form between Cys406-Cys435, Cys417-Cys430, Cys419-Cys425, Cys429-Cys452, Cys443-Cys449, Cys448-Cys474, Cys461-Cys481, Cys468-Cys499, Cys492-Cys504, Cys511-Cys561, Cys526-Cys572, Cys539-Cys549, Cys556-Cys598, and Cys592-Cys603. The D/ECD-tripeptide signature appears at 467 to 469; the sequence is ECD. The Ca(2+) site is built by Asp469, Met470, Asp472, Asp483, and Arg484.

It belongs to the venom metalloproteinase (M12B) family. P-III subfamily. P-IIIc sub-subfamily. In terms of assembly, homodimer; disulfide-linked. Requires Zn(2+) as cofactor. Post-translationally, the N-terminus is blocked. As to expression, expressed by the venom gland.

It localises to the secreted. Inhibited by EDTA and EGTA, but not by PMSF. Zinc metalloprotease that has fibrinogenolytic and hemorrhagic activities. It induces apoptosis in vascular endothelial cells (VEC), without degrading extracellular matrix (it cannot cleave collagen) or inhibiting adhesion of VEC. VAP1-induced apoptosis is inhibited by antibodies for integrin alpha-3, alpha-6, beta-1 and CD9. Apoptosis is accompanied by severe cell fragmentation, which is controlled by caspases. The polypeptide is Zinc metalloproteinase-disintegrin-like VAP1 (Crotalus atrox (Western diamondback rattlesnake)).